The primary structure comprises 190 residues: Elongation factor P-like protein (190 aa).

Belongs to the elongation factor P family.

The polypeptide is Elongation factor P-like protein (Shigella boydii serotype 4 (strain Sb227)).